The following is a 2849-amino-acid chain: Polycystin-1-like protein 1 (2849 aa).

Residues methionine 1–proline 1748 lie on the Extracellular side of the membrane. 13 N-linked (GlcNAc...) asparagine glycosylation sites follow: asparagine 8, asparagine 295, asparagine 338, asparagine 376, asparagine 447, asparagine 482, asparagine 514, asparagine 605, asparagine 657, asparagine 751, asparagine 875, asparagine 926, and asparagine 937. 2 PKD domains span residues serine 508 to lysine 590 and valine 592 to proline 673. Residues cysteine 674 to arginine 1571 form the REJ domain. Over residues asparagine 970 to proline 987 the composition is skewed to low complexity. 2 disordered regions span residues asparagine 970–serine 1068 and isoleucine 1081–leucine 1118. Over residues arginine 1053–serine 1068 the composition is skewed to basic and acidic residues. 6 N-linked (GlcNAc...) asparagine glycosylation sites follow: asparagine 1233, asparagine 1301, asparagine 1306, asparagine 1572, asparagine 1681, and asparagine 1716. Residues glutamine 1587 to serine 1735 form the GAIN-B domain. Cysteine 1691 and cysteine 1717 are joined by a disulfide. The interval cysteine 1691–serine 1735 is GPS. A helical transmembrane segment spans residues glutamate 1749–alanine 1769. The Cytoplasmic segment spans residues lysine 1770–arginine 1956. The PLAT domain maps to glutamine 1796–threonine 1913. Residues leucine 1957–glycine 1977 form a helical membrane-spanning segment. Topologically, residues glycine 1978 to serine 1992 are extracellular. Residues phenylalanine 1993–leucine 2013 form a helical membrane-spanning segment. Residues phenylalanine 2014 to serine 2135 are Cytoplasmic-facing. Residues serine 2023–glutamine 2089 are disordered. The chain crosses the membrane as a helical span at residues alanine 2136 to alanine 2156. Over tyrosine 2157 to serine 2174 the chain is Extracellular. The chain crosses the membrane as a helical span at residues valine 2175–alanine 2195. At tryptophan 2196–arginine 2281 the chain is on the cytoplasmic side. Residues alanine 2282 to tyrosine 2302 traverse the membrane as a helical segment. Residues glycine 2303–histidine 2522 are Extracellular-facing. Asparagine 2426 carries N-linked (GlcNAc...) asparagine glycosylation. The chain crosses the membrane as a helical span at residues leucine 2523 to tyrosine 2543. Topologically, residues arginine 2544–glutamate 2562 are cytoplasmic. A helical transmembrane segment spans residues leucine 2563–alanine 2583. Residues glycine 2584 to glycine 2616 are Extracellular-facing. Residues isoleucine 2617–alanine 2637 form a helical membrane-spanning segment. At serine 2638–serine 2646 the chain is on the cytoplasmic side. A helical membrane pass occupies residues leucine 2647–leucine 2667. The Extracellular portion of the chain corresponds to histidine 2668–arginine 2711. A helical transmembrane segment spans residues alanine 2712 to leucine 2732. At arginine 2733–phenylalanine 2849 the chain is on the cytoplasmic side.

Belongs to the polycystin family. Heterodimer. Interacts with PKD2 to form a calcium channel. Interacts with PKD2L1; to form ciliary calcium channel. May interact with GNA12, GNAS, GNAI1 and GNAI2. Detected in testis and in fetal and adult heart.

It localises to the cell projection. Its subcellular location is the cilium membrane. Its function is as follows. Component of a calcium-permeant ion channel formed by PKD1L2 and PKD1L1 in primary cilia, where it controls cilium calcium concentration, without affecting cytoplasmic calcium concentration, and regulates sonic hedgehog/SHH signaling and GLI2 transcription. The PKD1L1:PKD2L1 channel complex is mechanosensitive only at high pressures and is highly temperature sensitive. Also involved in left/right axis specification downstream of nodal flow by forming a complex with PKD2 in cilia to facilitate flow detection in left/right patterning. May function as a G-protein-coupled receptor. The protein is Polycystin-1-like protein 1 of Homo sapiens (Human).